The following is a 181-amino-acid chain: Large ribosomal subunit protein uL6 (181 aa).

It belongs to the universal ribosomal protein uL6 family. Part of the 50S ribosomal subunit.

Functionally, this protein binds to the 23S rRNA, and is important in its secondary structure. It is located near the subunit interface in the base of the L7/L12 stalk, and near the tRNA binding site of the peptidyltransferase center. The sequence is that of Large ribosomal subunit protein uL6 from Flavobacterium psychrophilum (strain ATCC 49511 / DSM 21280 / CIP 103535 / JIP02/86).